Reading from the N-terminus, the 121-residue chain is Large ribosomal subunit protein uL22 (121 aa).

This sequence belongs to the universal ribosomal protein uL22 family. In terms of assembly, part of the 50S ribosomal subunit.

Its function is as follows. This protein binds specifically to 23S rRNA; its binding is stimulated by other ribosomal proteins, e.g. L4, L17, and L20. It is important during the early stages of 50S assembly. It makes multiple contacts with different domains of the 23S rRNA in the assembled 50S subunit and ribosome. In terms of biological role, the globular domain of the protein is located near the polypeptide exit tunnel on the outside of the subunit, while an extended beta-hairpin is found that lines the wall of the exit tunnel in the center of the 70S ribosome. This chain is Large ribosomal subunit protein uL22, found in Synechococcus sp. (strain CC9311).